A 297-amino-acid chain; its full sequence is tRNA uridine(34) hydroxylase (297 aa).

The region spanning 133–228 (RGEEVVFFDG…YGETFKDQGL (96 aa)) is the Rhodanese domain. Cys-188 functions as the Cysteine persulfide intermediate in the catalytic mechanism.

Belongs to the TrhO family.

It carries out the reaction uridine(34) in tRNA + AH2 + O2 = 5-hydroxyuridine(34) in tRNA + A + H2O. Functionally, catalyzes oxygen-dependent 5-hydroxyuridine (ho5U) modification at position 34 in tRNAs. The polypeptide is tRNA uridine(34) hydroxylase (Arthrobacter sp. (strain FB24)).